Consider the following 406-residue polypeptide: S-adenosylmethionine synthase (406 aa).

Residue 140-145 (GRGSVD) participates in ATP binding.

Belongs to the AdoMet synthase 2 family. Mg(2+) serves as cofactor.

It catalyses the reaction L-methionine + ATP + H2O = S-adenosyl-L-methionine + phosphate + diphosphate. It participates in amino-acid biosynthesis; S-adenosyl-L-methionine biosynthesis; S-adenosyl-L-methionine from L-methionine: step 1/1. Functionally, catalyzes the formation of S-adenosylmethionine from methionine and ATP. The protein is S-adenosylmethionine synthase (mat) of Aeropyrum pernix (strain ATCC 700893 / DSM 11879 / JCM 9820 / NBRC 100138 / K1).